The following is an 82-amino-acid chain: Small ribosomal subunit protein bS16 (82 aa).

This sequence belongs to the bacterial ribosomal protein bS16 family.

The sequence is that of Small ribosomal subunit protein bS16 from Histophilus somni (strain 2336) (Haemophilus somnus).